Here is a 172-residue protein sequence, read N- to C-terminus: Bcl-2-related protein A1 (172 aa).

Positions 77–97 (KEFEDGIINWGRIVTIFAFGG) match the BH1 motif. The BH2 motif lies at 132 to 147 (EWIRQNGGWEDGFIKK).

It belongs to the Bcl-2 family. As to quaternary structure, interacts directly with BCL2L11/BIM and PMAIP1. Interacts directly with BAK1, BID, BMF and BBC3. Interacts with BOP. Interacts with isoform 3, isoform 4 and isoform 5 of ING4. Interacts with UBQLN4. Expressed in hemopoietic tissues, including bone marrow, spleen and thymus.

The protein resides in the cytoplasm. Retards apoptosis induced by IL-3 deprivation. May function in the response of hemopoietic cells to external signals and in maintaining endothelial survival during infection. Can inhibit apoptosis induced by serum starvation in the mammary epithelial cell line HC11. This is Bcl-2-related protein A1 (Bcl2a1) from Mus musculus (Mouse).